The primary structure comprises 126 residues: Thioredoxin domain-containing protein, mitochondrial (126 aa).

In terms of domain architecture, Thioredoxin spans 14–120; sequence SQKIATNTSF…ILEFLNHIET (107 aa).

Belongs to the thioredoxin family.

It is found in the mitochondrion. This chain is Thioredoxin domain-containing protein, mitochondrial, found in Dictyostelium discoideum (Social amoeba).